We begin with the raw amino-acid sequence, 236 residues long: MKFFIFTCLLAVALAKHNMEHRSSSEDSVNISQEKFKQEKYVVIPTSKESICSTSCEEATRNINEMESAKFPTEVYSSSSSSEESAKFPTEREEKEVEEKHHLKQLNKINQFYEKLNFLQYLQALRQPRIVLTPWDQTKTGASPFIPIVNTEQLFTSEEIPKKTVDMESTEVVTEKTELTEEEKNYLKLLNKINQYYEKFTLPQYFKIVHQHQTTMDPQSHSKTNSYQIIPVLRYF.

The signal sequence occupies residues 1–15 (MKFFIFTCLLAVALA). Residues serine 23, serine 24, serine 25, serine 28, serine 47, serine 80, serine 81, serine 82, serine 85, serine 157, and serine 169 each carry the phosphoserine modification. The disordered stretch occupies residues 72–93 (PTEVYSSSSSSEESAKFPTERE). Residues 84–93 (ESAKFPTERE) show a composition bias toward basic and acidic residues.

This sequence belongs to the alpha-casein family. There are at least three different forms found in milk, with varying degrees of phosphorylation. These include form 10-P which is phosphorylated at ten sites that have not been determined, form 11-P which is phosphorylated at eleven sites and form 12-P which is phosphorylated at twelve sites. Mammary gland specific. Secreted in milk.

The protein localises to the secreted. Functionally, important role in the capacity of milk to transport calcium phosphate. This is Alpha-S2-casein from Equus asinus (Donkey).